A 125-amino-acid chain; its full sequence is Casein kinase I isoform alpha (125 aa).

Positions Gly1–Tyr125 constitute a Protein kinase domain. Residue Lys7 coordinates ATP. The active-site Proton acceptor is Asp97.

Belongs to the protein kinase superfamily. CK1 Ser/Thr protein kinase family. Casein kinase I subfamily. In terms of assembly, interacts with the Axin complex. Interacts with TUT1, leading to TUT1 phosphorylation. Interacts with FAM83A, FAM83B, FAM83C, FAM83D, FAM83E, FAM83F, FAM83G and FAM83H (via DUF1669). Interaction with FAM83H recruits CSNK1A1 to keratin filaments. Post-translationally, phosphorylated by MTOR in response to mitogenic stimulation, leading to its activation.

The protein resides in the cytoplasm. Its subcellular location is the cytoskeleton. The protein localises to the microtubule organizing center. It is found in the centrosome. It localises to the chromosome. The protein resides in the centromere. Its subcellular location is the kinetochore. The protein localises to the nucleus speckle. It is found in the cilium basal body. It localises to the spindle. It carries out the reaction L-seryl-[protein] + ATP = O-phospho-L-seryl-[protein] + ADP + H(+). It catalyses the reaction L-threonyl-[protein] + ATP = O-phospho-L-threonyl-[protein] + ADP + H(+). Its function is as follows. Casein kinases are operationally defined by their preferential utilization of acidic proteins such as caseins as substrates. It can phosphorylate a large number of proteins. Participates in Wnt signaling. Phosphorylates CTNNB1 at 'Ser-45'. May phosphorylate PER1 and PER2. May play a role in segregating chromosomes during mitosis. May play a role in keratin cytoskeleton disassembly and thereby, it may regulate epithelial cell migration. Acts as a positive regulator of mTORC1 and mTORC2 signaling in response to nutrients by mediating phosphorylation of DEPTOR inhibitor. Acts as an inhibitor of NLRP3 inflammasome assembly by mediating phosphorylation of NLRP3. The protein is Casein kinase I isoform alpha (CSNK1A1) of Sus scrofa (Pig).